We begin with the raw amino-acid sequence, 296 residues long: Heme oxygenase 1 (296 aa).

The Cytoplasmic portion of the chain corresponds to Met-1–Ser-273. The heme b site is built by Lys-21, His-28, Tyr-137, and Arg-186. The disordered stretch occupies residues Gly-231–Arg-264. The segment covering Ala-238–Glu-250 has biased composition (basic and acidic residues). The chain crosses the membrane as a helical; Anchor for type IV membrane protein span at residues Pro-274–Met-296.

The protein belongs to the heme oxygenase family. As to quaternary structure, homodimer and higher order homooligomer. Oligomerization is crucial for its stability and function in the endoplasmic reticulum. In terms of processing, a soluble form arises by proteolytic removal of the membrane anchor.

It is found in the endoplasmic reticulum membrane. The enzyme catalyses heme b + 3 reduced [NADPH--hemoprotein reductase] + 3 O2 = biliverdin IXalpha + CO + Fe(2+) + 3 oxidized [NADPH--hemoprotein reductase] + 3 H2O + H(+). Inhibited by metalloporphyrins in the following order of decreasing potency: tin mesoporphyrin &gt; tin protoporphyrin &gt; zinc protoporphyrin &gt; manganese protoporphyrin &gt; cobalt protoporphyrin. Its function is as follows. Catalyzes the oxidative cleavage of heme at the alpha-methene bridge carbon, released as carbon monoxide (CO), to generate biliverdin IXalpha, while releasing the central heme iron chelate as ferrous iron. Affords protection against programmed cell death and this cytoprotective effect relies on its ability to catabolize free heme and prevent it from sensitizing cells to undergo apoptosis. In terms of biological role, catalyzes the oxidative cleavage of heme at the alpha-methene bridge carbon, released as carbon monoxide (CO), to generate biliverdin IXalpha, while releasing the central heme iron chelate as ferrous iron. The sequence is that of Heme oxygenase 1 (HMOX1) from Gallus gallus (Chicken).